Consider the following 239-residue polypeptide: Tumor necrosis factor ligand superfamily member 14 (239 aa).

At 1–37 the chain is on the cytoplasmic side; it reads MESVVQPSVFVVDGQTDIPFRRLEQNHRRRRCGTVQV. The chain crosses the membrane as a helical; Signal-anchor for type II membrane protein span at residues 38-58; it reads SLALVLLLGAGLATQGWFLLR. At 59–239 the chain is on the extracellular side; the sequence is LHQRLGDIVA…TRSYFGAFMV (181 aa). The 148-residue stretch at 92–239 folds into the THD domain; that stretch reads PAAHLTGANA…TRSYFGAFMV (148 aa). Asn100 carries an N-linked (GlcNAc...) asparagine glycan. Cys152 and Cys187 are oxidised to a cystine. Asn191 is a glycosylation site (N-linked (GlcNAc...) asparagine).

The protein belongs to the tumor necrosis factor family. In terms of assembly, homotrimer. Interacts with TNFRSF14. Post-translationally, the soluble form derives from the membrane form by proteolytic processing.

The protein localises to the cell membrane. The protein resides in the secreted. In terms of biological role, cytokine that binds to TNFRSF3/LTBR. Binding to the decoy receptor TNFRSF6B modulates its effects. Activates NFKB and stimulates the proliferation of T-cells. Acts as a ligand for TNFRSF14/HVEM. Upon binding to TNFRSF14/HVEM, delivers costimulatory signals to T cells, leading to T cell proliferation and IFNG production. The chain is Tumor necrosis factor ligand superfamily member 14 (Tnfsf14) from Mus musculus (Mouse).